We begin with the raw amino-acid sequence, 700 residues long: DNA ligase (700 aa).

Residues 42 to 46, 91 to 92, and glutamate 126 each bind NAD(+); these read DDEYD and SL. The active-site N6-AMP-lysine intermediate is the lysine 128. NAD(+) is bound by residues arginine 149, glutamate 184, lysine 300, and lysine 324. Cysteine 418, cysteine 421, cysteine 436, and cysteine 441 together coordinate Zn(2+). Positions 598-686 constitute a BRCT domain; that stretch reads TRTDQLSGLN…GLGERGVAED (89 aa).

It belongs to the NAD-dependent DNA ligase family. LigA subfamily. The cofactor is Mn(2+).

The enzyme catalyses NAD(+) + (deoxyribonucleotide)n-3'-hydroxyl + 5'-phospho-(deoxyribonucleotide)m = (deoxyribonucleotide)n+m + AMP + beta-nicotinamide D-nucleotide.. Its function is as follows. DNA ligase that catalyzes the formation of phosphodiester linkages between 5'-phosphoryl and 3'-hydroxyl groups in double-stranded DNA using NAD as a coenzyme and as the energy source for the reaction. It is essential for DNA replication and repair of damaged DNA. This is DNA ligase from Deinococcus radiodurans (strain ATCC 13939 / DSM 20539 / JCM 16871 / CCUG 27074 / LMG 4051 / NBRC 15346 / NCIMB 9279 / VKM B-1422 / R1).